We begin with the raw amino-acid sequence, 307 residues long: tRNA dimethylallyltransferase (307 aa).

9–16 (GPTAVGKT) provides a ligand contact to ATP. 11–16 (TAVGKT) serves as a coordination point for substrate. The segment at 34–37 (DSMQ) is interaction with substrate tRNA.

Belongs to the IPP transferase family. As to quaternary structure, monomer. Requires Mg(2+) as cofactor.

The catalysed reaction is adenosine(37) in tRNA + dimethylallyl diphosphate = N(6)-dimethylallyladenosine(37) in tRNA + diphosphate. Catalyzes the transfer of a dimethylallyl group onto the adenine at position 37 in tRNAs that read codons beginning with uridine, leading to the formation of N6-(dimethylallyl)adenosine (i(6)A). This chain is tRNA dimethylallyltransferase, found in Limosilactobacillus fermentum (strain NBRC 3956 / LMG 18251) (Lactobacillus fermentum).